Reading from the N-terminus, the 74-residue chain is Mu-Sparatoxin-Hp2 (74 aa).

Residues 1 to 20 (MKIIVLMMMLFAAFSAVVLA) form the signal peptide. Positions 21–35 (DKSIEDAALDTVMDR) are excised as a propeptide. Cystine bridges form between cysteine 42-cysteine 57, cysteine 49-cysteine 62, and cysteine 56-cysteine 66. Leucine 73 bears the Leucine amide mark.

Expressed by the venom gland.

It is found in the secreted. In terms of biological role, weakly nhibits voltage-gated sodium channels Nav1.7/SCN9A. High concentration of the toxin (3 uM) inhibits Nav1.7/SCN9A currents by 80%. The protein is Mu-Sparatoxin-Hp2 of Heteropoda pingtungensis (Pingtung huntsman spider).